We begin with the raw amino-acid sequence, 343 residues long: NADP-dependent alkenal double bond reductase P2 (343 aa).

Substrate-binding residues include tyrosine 52 and tyrosine 79. Residues 164–167 (GAVG), lysine 190, tyrosine 206, asparagine 230, 252–258 (CGMISQY), 282–284 (FVV), and asparagine 332 each bind NADP(+).

Belongs to the NADP-dependent oxidoreductase L4BD family. As to quaternary structure, homodimer.

It carries out the reaction an n-alkanal + NAD(+) = an alk-2-enal + NADH + H(+). The enzyme catalyses an n-alkanal + NADP(+) = an alk-2-enal + NADPH + H(+). In terms of biological role, catalyzes the reduction of the 7-8 double bond of phenylpropanal substrates, such as p-coumaryl aldehyde and coniferyl aldehyde (in vitro). Has activity towards toxic substrates, such as 4-hydroxy-(2E)-nonenal (in vitro). May play a distinct role in plant antioxidant defense and is possibly involved in NAD(P)/NAD(P)h homeostasis. The polypeptide is NADP-dependent alkenal double bond reductase P2 (P2) (Arabidopsis thaliana (Mouse-ear cress)).